A 61-amino-acid chain; its full sequence is Large ribosomal subunit protein bL28 (61 aa).

The segment at 1–21 (MAKDYVTGKKTTFGNKRSHAM) is disordered.

The protein belongs to the bacterial ribosomal protein bL28 family.

This chain is Large ribosomal subunit protein bL28, found in Lactobacillus helveticus (strain DPC 4571).